The chain runs to 149 residues: UPF0178 protein Lmo1456 (149 aa).

Belongs to the UPF0178 family.

The protein is UPF0178 protein Lmo1456 of Listeria monocytogenes serovar 1/2a (strain ATCC BAA-679 / EGD-e).